Here is a 320-residue protein sequence, read N- to C-terminus: Ferrochelatase (320 aa).

2 residues coordinate Fe cation: H194 and E275.

Belongs to the ferrochelatase family.

The protein resides in the cytoplasm. It carries out the reaction heme b + 2 H(+) = protoporphyrin IX + Fe(2+). The protein operates within porphyrin-containing compound metabolism; protoheme biosynthesis; protoheme from protoporphyrin-IX: step 1/1. Catalyzes the ferrous insertion into protoporphyrin IX. The polypeptide is Ferrochelatase (Xylella fastidiosa (strain M23)).